The following is a 419-amino-acid chain: Serine hydroxymethyltransferase (419 aa).

Residues Leu121 and 125–127 (GHL) contribute to the (6S)-5,6,7,8-tetrahydrofolate site. Position 230 is an N6-(pyridoxal phosphate)lysine (Lys230). 355-357 (SPF) contacts (6S)-5,6,7,8-tetrahydrofolate.

This sequence belongs to the SHMT family. Homodimer. The cofactor is pyridoxal 5'-phosphate.

It localises to the cytoplasm. The enzyme catalyses (6R)-5,10-methylene-5,6,7,8-tetrahydrofolate + glycine + H2O = (6S)-5,6,7,8-tetrahydrofolate + L-serine. Its pathway is one-carbon metabolism; tetrahydrofolate interconversion. The protein operates within amino-acid biosynthesis; glycine biosynthesis; glycine from L-serine: step 1/1. Catalyzes the reversible interconversion of serine and glycine with tetrahydrofolate (THF) serving as the one-carbon carrier. This reaction serves as the major source of one-carbon groups required for the biosynthesis of purines, thymidylate, methionine, and other important biomolecules. Also exhibits THF-independent aldolase activity toward beta-hydroxyamino acids, producing glycine and aldehydes, via a retro-aldol mechanism. In Streptococcus equi subsp. zooepidemicus (strain MGCS10565), this protein is Serine hydroxymethyltransferase.